The following is a 275-amino-acid chain: Large ribosomal subunit protein uL2 (275 aa).

The interval 212–275 is disordered; sequence NRHRGIRPQT…DKLIISRRKK (64 aa). Positions 257–275 are enriched in basic residues; the sequence is YKTRRKKPSDKLIISRRKK.

The protein belongs to the universal ribosomal protein uL2 family. In terms of assembly, part of the 50S ribosomal subunit. Forms a bridge to the 30S subunit in the 70S ribosome.

In terms of biological role, one of the primary rRNA binding proteins. Required for association of the 30S and 50S subunits to form the 70S ribosome, for tRNA binding and peptide bond formation. It has been suggested to have peptidyltransferase activity; this is somewhat controversial. Makes several contacts with the 16S rRNA in the 70S ribosome. The protein is Large ribosomal subunit protein uL2 of Nitratiruptor sp. (strain SB155-2).